We begin with the raw amino-acid sequence, 416 residues long: GTPase ERA1, chloroplastic (416 aa).

Residues 1–53 (MELGLALRLVAPPPLLPCLSRRALSLPPDFVSSRVLRGRRIHASRLKHGAGVV) constitute a chloroplast transit peptide. Residues 117–287 (RSGYVAVLGK…KEWILSKLPL (171 aa)) form the Era-type G domain. The tract at residues 125–132 (GKPNVGKS) is G1. 125 to 132 (GKPNVGKS) provides a ligand contact to GTP. A G2 region spans residues 151–155 (QTTRH). The interval 172–175 (DTPG) is G3. GTP is bound by residues 172 to 176 (DTPGV) and 237 to 240 (NKKD). Positions 237 to 240 (NKKD) are G4. Residues 266–268 (ISA) form a G5 region. The KH type-2 domain occupies 318–395 (YRQEIPYSCQ…YLEVEVKVKE (78 aa)).

It belongs to the TRAFAC class TrmE-Era-EngA-EngB-Septin-like GTPase superfamily. Era GTPase family.

Its subcellular location is the plastid. It is found in the chloroplast stroma. The protein resides in the chloroplast nucleoid. Its function is as follows. Nuclear genome-encoded probable GTPase involved in ribosome biogenesis in chloroplasts. Plays a role in 16S rRNA maturation in plastids and may contribute to the assembly of the small (30S) ribosomal subunit. In Zea mays (Maize), this protein is GTPase ERA1, chloroplastic.